The following is a 920-amino-acid chain: Isoleucine--tRNA ligase (920 aa).

A 'HIGH' region motif is present at residues 58-68 (PYANGHLHLGH). E569 lines the L-isoleucyl-5'-AMP pocket. A 'KMSKS' region motif is present at residues 610–614 (KMSKS). Position 613 (K613) interacts with ATP. C895, C898, C910, and C913 together coordinate Zn(2+).

The protein belongs to the class-I aminoacyl-tRNA synthetase family. IleS type 1 subfamily. As to quaternary structure, monomer. Zn(2+) is required as a cofactor.

It localises to the cytoplasm. It catalyses the reaction tRNA(Ile) + L-isoleucine + ATP = L-isoleucyl-tRNA(Ile) + AMP + diphosphate. In terms of biological role, catalyzes the attachment of isoleucine to tRNA(Ile). As IleRS can inadvertently accommodate and process structurally similar amino acids such as valine, to avoid such errors it has two additional distinct tRNA(Ile)-dependent editing activities. One activity is designated as 'pretransfer' editing and involves the hydrolysis of activated Val-AMP. The other activity is designated 'posttransfer' editing and involves deacylation of mischarged Val-tRNA(Ile). This is Isoleucine--tRNA ligase from Helicobacter pylori (strain J99 / ATCC 700824) (Campylobacter pylori J99).